Here is a 701-residue protein sequence, read N- to C-terminus: Ribosomal RNA large subunit methyltransferase K/L (701 aa).

Positions Leu-43–Leu-154 constitute a THUMP domain.

Belongs to the methyltransferase superfamily. RlmKL family.

The protein resides in the cytoplasm. The enzyme catalyses guanosine(2445) in 23S rRNA + S-adenosyl-L-methionine = N(2)-methylguanosine(2445) in 23S rRNA + S-adenosyl-L-homocysteine + H(+). It carries out the reaction guanosine(2069) in 23S rRNA + S-adenosyl-L-methionine = N(2)-methylguanosine(2069) in 23S rRNA + S-adenosyl-L-homocysteine + H(+). Functionally, specifically methylates the guanine in position 2445 (m2G2445) and the guanine in position 2069 (m7G2069) of 23S rRNA. The chain is Ribosomal RNA large subunit methyltransferase K/L from Klebsiella pneumoniae subsp. pneumoniae (strain ATCC 700721 / MGH 78578).